The sequence spans 81 residues: ATP synthase subunit c, chloroplastic (81 aa).

The next 2 helical transmembrane spans lie at 7–27 (AASVIAAGLAVGLASIGPGVG) and 57–77 (LAFMEALTIYGLVVALALLFA).

Belongs to the ATPase C chain family. As to quaternary structure, F-type ATPases have 2 components, F(1) - the catalytic core - and F(0) - the membrane proton channel. F(1) has five subunits: alpha(3), beta(3), gamma(1), delta(1), epsilon(1). F(0) has four main subunits: a(1), b(1), b'(1) and c(10-14). The alpha and beta chains form an alternating ring which encloses part of the gamma chain. F(1) is attached to F(0) by a central stalk formed by the gamma and epsilon chains, while a peripheral stalk is formed by the delta, b and b' chains.

It is found in the plastid. The protein resides in the chloroplast thylakoid membrane. Functionally, f(1)F(0) ATP synthase produces ATP from ADP in the presence of a proton or sodium gradient. F-type ATPases consist of two structural domains, F(1) containing the extramembraneous catalytic core and F(0) containing the membrane proton channel, linked together by a central stalk and a peripheral stalk. During catalysis, ATP synthesis in the catalytic domain of F(1) is coupled via a rotary mechanism of the central stalk subunits to proton translocation. Key component of the F(0) channel; it plays a direct role in translocation across the membrane. A homomeric c-ring of between 10-14 subunits forms the central stalk rotor element with the F(1) delta and epsilon subunits. This is ATP synthase subunit c, chloroplastic from Arabis hirsuta (Hairy rock-cress).